The chain runs to 89 residues: Conotoxin Lt6.4 (89 aa).

An N-terminal signal peptide occupies residues 1-22 (MKLTCVPIVAMLFLMACQLITA). Residues 23–50 (DYSREKHGYSAEKSSDKIQDSFYSKLTK) constitute a propeptide that is removed on maturation. Disulfide bonds link C52–C67, C59–C71, and C66–C80.

It belongs to the conotoxin O1 superfamily. As to expression, expressed by the venom duct.

The protein resides in the secreted. This chain is Conotoxin Lt6.4, found in Conus litteratus (Lettered cone).